A 360-amino-acid chain; its full sequence is Cinnamyl alcohol dehydrogenase 2 (360 aa).

An Enoyl reductase (ER) domain is found at 23 to 351 (GVLSPFNFSR…KADVKYRFVI (329 aa)). Cys-50 lines the Zn(2+) pocket. Position 52 (Ser-52) interacts with an alcohol. Ser-52 contributes to the NADP(+) binding site. Residues Asp-53, His-72, Glu-73, Cys-103, Cys-106, Cys-109, Cys-117, and Cys-166 each contribute to the Zn(2+) site. His-72 is a binding site for an alcohol. NADP(+) is bound by residues Leu-192, Gly-194, Leu-195, Ser-214, Thr-215, Ser-216, Lys-219, Lys-220, Val-277, Ala-279, Ser-301, and Arg-348.

It belongs to the zinc-containing alcohol dehydrogenase family. Class-P subfamily. As to quaternary structure, homodimer. It depends on Zn(2+) as a cofactor. As to expression, mainly expressed in young roots and, to a lower extent, in stems and leaves.

The protein localises to the cytoplasm. It carries out the reaction (E)-cinnamyl alcohol + NADP(+) = (E)-cinnamaldehyde + NADPH + H(+). Alcohol dehydrogenase that catalyzes the conversion of (E)-cinnamyl alcohol to (E)-cinnamaldehyde. This is Cinnamyl alcohol dehydrogenase 2 from Rauvolfia serpentina (Serpentine wood).